Consider the following 228-residue polypeptide: Immunogenic protein MPB64 (228 aa).

Residues 1–23 (MRIKIFMLVTAVVLLCCSGVATA) form the signal peptide.

This sequence belongs to the RsiV family.

Its subcellular location is the secreted. The sequence is that of Immunogenic protein MPB64 (mpb64) from Mycobacterium bovis (strain ATCC BAA-935 / AF2122/97).